Consider the following 210-residue polypeptide: N-(5'-phosphoribosyl)anthranilate isomerase (210 aa).

The protein belongs to the TrpF family.

It carries out the reaction N-(5-phospho-beta-D-ribosyl)anthranilate = 1-(2-carboxyphenylamino)-1-deoxy-D-ribulose 5-phosphate. It functions in the pathway amino-acid biosynthesis; L-tryptophan biosynthesis; L-tryptophan from chorismate: step 3/5. This is N-(5'-phosphoribosyl)anthranilate isomerase from Crocosphaera subtropica (strain ATCC 51142 / BH68) (Cyanothece sp. (strain ATCC 51142)).